Here is a 298-residue protein sequence, read N- to C-terminus: ATP phosphoribosyltransferase (298 aa).

Belongs to the ATP phosphoribosyltransferase family. Long subfamily. The cofactor is Mg(2+).

The protein localises to the cytoplasm. The enzyme catalyses 1-(5-phospho-beta-D-ribosyl)-ATP + diphosphate = 5-phospho-alpha-D-ribose 1-diphosphate + ATP. The protein operates within amino-acid biosynthesis; L-histidine biosynthesis; L-histidine from 5-phospho-alpha-D-ribose 1-diphosphate: step 1/9. Its activity is regulated as follows. Feedback inhibited by histidine. Functionally, catalyzes the condensation of ATP and 5-phosphoribose 1-diphosphate to form N'-(5'-phosphoribosyl)-ATP (PR-ATP). Has a crucial role in the pathway because the rate of histidine biosynthesis seems to be controlled primarily by regulation of HisG enzymatic activity. The sequence is that of ATP phosphoribosyltransferase from Vibrio vulnificus (strain CMCP6).